We begin with the raw amino-acid sequence, 154 residues long: Ribonuclease H (154 aa).

Residues 1–142 (MRKQVEIFTD…CDELARAAAG (142 aa)) form the RNase H type-1 domain. Mg(2+)-binding residues include Asp10, Glu48, Asp70, and Asp134.

It belongs to the RNase H family. Monomer. Mg(2+) serves as cofactor.

It localises to the cytoplasm. It carries out the reaction Endonucleolytic cleavage to 5'-phosphomonoester.. In terms of biological role, endonuclease that specifically degrades the RNA of RNA-DNA hybrids. This is Ribonuclease H from Pectobacterium carotovorum subsp. carotovorum (strain PC1).